The chain runs to 336 residues: UDP-N-acetylenolpyruvoylglucosamine reductase (336 aa).

An FAD-binding PCMH-type domain is found at 17–188 (LRSLAERFVE…WDVTFRLPKK (172 aa)). Arg-164 is a catalytic residue. Catalysis depends on Ser-237, which acts as the Proton donor. The active site involves Glu-332.

This sequence belongs to the MurB family. FAD is required as a cofactor.

It is found in the cytoplasm. It carries out the reaction UDP-N-acetyl-alpha-D-muramate + NADP(+) = UDP-N-acetyl-3-O-(1-carboxyvinyl)-alpha-D-glucosamine + NADPH + H(+). It functions in the pathway cell wall biogenesis; peptidoglycan biosynthesis. In terms of biological role, cell wall formation. In Bdellovibrio bacteriovorus (strain ATCC 15356 / DSM 50701 / NCIMB 9529 / HD100), this protein is UDP-N-acetylenolpyruvoylglucosamine reductase.